The sequence spans 116 residues: Putative antiporter subunit mnhC2 (116 aa).

A run of 3 helical transmembrane segments spans residues 3-23, 28-48, and 72-92; these read LILL…ILSV, IVIG…SMGN, and AIVL…LVLV.

It belongs to the CPA3 antiporters (TC 2.A.63) subunit C family. As to quaternary structure, may form a heterooligomeric complex that consists of seven subunits: mnhA2, mnhB2, mnhC2, mnhD2, mnhE2, mnhF2 and mnhG2.

Its subcellular location is the cell membrane. The chain is Putative antiporter subunit mnhC2 (mnhC2) from Staphylococcus saprophyticus subsp. saprophyticus (strain ATCC 15305 / DSM 20229 / NCIMB 8711 / NCTC 7292 / S-41).